The chain runs to 83 residues: Late seed maturation protein P8B6 (83 aa).

2 stretches are compositionally biased toward basic and acidic residues: residues 1-18 (MASQQEKKQLDERAKKGE) and 37-51 (AEGRSRGGNTRKEQL). The disordered stretch occupies residues 1–83 (MASQQEKKQL…DAEDEPSTRT (83 aa)). Over residues 73–83 (EDAEDEPSTRT) the composition is skewed to acidic residues.

Belongs to the small hydrophilic plant seed protein family.

It localises to the cytoplasm. Its function is as follows. This protein may play a role in equipping the seed for survival, maintaining a minimal level of hydration in the dry organism and preventing the denaturation of cytoplasmic components, or may play a role during imbibition by controlling water uptake. The chain is Late seed maturation protein P8B6 from Raphanus sativus (Radish).